The following is a 149-amino-acid chain: D-aminoacyl-tRNA deacylase (149 aa).

Residues 137 to 138 (GP) carry the Gly-cisPro motif, important for rejection of L-amino acids motif.

The protein belongs to the DTD family. In terms of assembly, homodimer.

The protein resides in the cytoplasm. The catalysed reaction is glycyl-tRNA(Ala) + H2O = tRNA(Ala) + glycine + H(+). It catalyses the reaction a D-aminoacyl-tRNA + H2O = a tRNA + a D-alpha-amino acid + H(+). Functionally, an aminoacyl-tRNA editing enzyme that deacylates mischarged D-aminoacyl-tRNAs. Also deacylates mischarged glycyl-tRNA(Ala), protecting cells against glycine mischarging by AlaRS. Acts via tRNA-based rather than protein-based catalysis; rejects L-amino acids rather than detecting D-amino acids in the active site. By recycling D-aminoacyl-tRNA to D-amino acids and free tRNA molecules, this enzyme counteracts the toxicity associated with the formation of D-aminoacyl-tRNA entities in vivo and helps enforce protein L-homochirality. In Fervidobacterium nodosum (strain ATCC 35602 / DSM 5306 / Rt17-B1), this protein is D-aminoacyl-tRNA deacylase.